Reading from the N-terminus, the 69-residue chain is Dodecin (69 aa).

K3–Y5 is a binding site for FMN. CoA contacts are provided by residues K6, R28, and T32–R34. FMN contacts are provided by D37, W38, R45, Q57, and R65. R65–E67 serves as a coordination point for CoA.

It belongs to the dodecin family. In terms of assembly, homododecamer; four homotrimers assemble to form a dodecameric hollow sphere with an outer diameter of about 60 Angstroms. Flavin dimers are bound between subunits with a stoichiometry of 6 flavin dimers per dodecamer. Besides, trimeric coenzyme A molecules can be bound between subunits. A dodecamer can bind simultaneously 12 flavin and 12 coenzyme A molecules.

May function as storage protein that sequesters various flavins and other cofactors, thereby protecting the cell against undesirable reactions mediated by the free cofactors. Binds and sequesters FMN, FAD, lumiflavin and lumichrome, and can also bind coenzyme A. In Thermus thermophilus (strain ATCC 27634 / DSM 579 / HB8), this protein is Dodecin.